Consider the following 590-residue polypeptide: Potassium-transporting ATPase potassium-binding subunit (590 aa).

10 helical membrane-spanning segments follow: residues 11–31 (IFIA…AAVF), 64–84 (TAYC…TYLI), 136–156 (GLAT…IAFI), 178–198 (ILWV…SQGV), 273–293 (MLEM…LGQM), 301–321 (WAVL…CYWA), 403–423 (AGLY…GLMV), 442–462 (AMLY…VAVL), 511–531 (LGFA…ALAG), and 552–572 (LFTV…FLPA).

Belongs to the KdpA family. As to quaternary structure, the system is composed of three essential subunits: KdpA, KdpB and KdpC.

The protein localises to the cell inner membrane. Its function is as follows. Part of the high-affinity ATP-driven potassium transport (or Kdp) system, which catalyzes the hydrolysis of ATP coupled with the electrogenic transport of potassium into the cytoplasm. This subunit binds the periplasmic potassium ions and delivers the ions to the membrane domain of KdpB through an intramembrane tunnel. In Acidobacterium capsulatum (strain ATCC 51196 / DSM 11244 / BCRC 80197 / JCM 7670 / NBRC 15755 / NCIMB 13165 / 161), this protein is Potassium-transporting ATPase potassium-binding subunit.